The primary structure comprises 2415 residues: Bradyzoite-formation deficient protein 1 (2415 aa).

Disordered stretches follow at residues 369–392, 418–481, and 761–845; these read WNKP…PEET, HLTS…PYTR, and DGCG…QDTQ. Basic residues predominate over residues 419–429; it reads LTSRQHPNPRP. Positions 430 to 443 are enriched in basic and acidic residues; the sequence is RMKEEHCGREREVL. Composition is skewed to polar residues over residues 444-460 and 832-843; these read SSEQ…TPAS and PRTTSSSSYGQD. The 48-residue stretch at 921–968 folds into the Myb-like domain; the sequence is WSAEEDASLAELVSRKGFKWALISSQLTGAFGIPRTGKQCRERWFNHV. One can recognise an HTH myb-type domain in the interval 969–1023; sequence NPEVKKGDWSAEEDAMILMLQNELGNRWATIAKKLRGRTENAVKNRFISLSNARL. Residues 996–1019 constitute a DNA-binding region (H-T-H motif); the sequence is WATIAKKLRGRTENAVKNRFISLS. Disordered stretches follow at residues 1027 to 1050, 1098 to 1127, 1206 to 1270, 1319 to 1343, 1501 to 1521, 1905 to 1932, 1959 to 2013, and 2161 to 2222; these read RPKR…KSSG, VSRP…LKNT, NDER…NGLD, PACD…AQRQ, QLWT…QQHE, VSRD…TSQS, RVRW…GSTA, and GTDA…EMQD. Positions 1036–1050 are enriched in polar residues; sequence DCFSNRRTGSGKSSG. A compositionally biased stretch (basic and acidic residues) spans 1227-1237; it reads AHEHADIARSD. Polar residues-rich tracts occupy residues 1327–1343 and 1501–1520; these read PQNS…AQRQ and QLWT…NQQH. Polar residues predominate over residues 1974-1985; it reads SVSSGASNSATT. Basic and acidic residues predominate over residues 2181–2197; the sequence is QAHRRDGHDMQRVQRCD.

It localises to the nucleus. Master transcription factor that controls the differentiation of acute-stage tachyzoite parasites into chronic-stage bradyzoites, which form intracellular cysts resistant to immune clearance and existing therapies. Sufficient to drive differentiation into bradyzoite stage. Following translation in response to stress conditions, binds to the promoter of many chronic stage-specific genes and promotes their expression, thereby driving differentiation into bradyzoites. In Toxoplasma gondii (strain ATCC 50611 / Me49), this protein is Bradyzoite-formation deficient protein 1.